The following is a 478-amino-acid chain: GTPase Obg (478 aa).

In terms of domain architecture, Obg spans 2-159 (TTFVDRVELH…QDIHLELKTV (158 aa)). The segment at 60 to 88 (YHHSPHRKATNGKPGEGGNRSGKDGQDLV) is disordered. The 171-residue stretch at 160 to 330 (ADVALVGYPS…LSFALAELVA (171 aa)) folds into the OBG-type G domain. Residues 166-173 (GYPSAGKS), 191-195 (FTTLV), 212-215 (DVPG), 282-285 (NKID), and 311-313 (SAV) contribute to the GTP site. 2 residues coordinate Mg(2+): Ser173 and Thr193. The 83-residue stretch at 348–430 (PKAVDDAGFT…DNAVVFDWEP (83 aa)) folds into the OCT domain. The disordered stretch occupies residues 438–478 (MLGRRGEDHRFEAPRPAAQRRRDRDAERDEAQQEFDGFEPF). Composition is skewed to basic and acidic residues over residues 439–450 (LGRRGEDHRFEA) and 457–468 (RRRDRDAERDEA). A compositionally biased stretch (acidic residues) spans 469-478 (QQEFDGFEPF).

It belongs to the TRAFAC class OBG-HflX-like GTPase superfamily. OBG GTPase family. In terms of assembly, monomer. Mg(2+) is required as a cofactor.

It localises to the cytoplasm. The protein resides in the cell membrane. Functionally, plays an unknown essential role and a regulatory role in sporulation. Overexpression suppresses sporulation although cell growth rate was not reduced. Impaired differentiation was eliminated by addition of decoyinine, an inhibitor of GMP synthesis. Overexpression has no effect on undecylprodigiosin production, but decreases actinorhodin production. An essential GTPase which binds GTP, GDP and possibly (p)ppGpp with moderate affinity, with high nucleotide exchange rates and a fairly low GTP hydrolysis rate. Plays a role in control of the cell cycle, stress response, ribosome biogenesis and in those bacteria that undergo differentiation, in morphogenesis control. The protein is GTPase Obg of Streptomyces coelicolor (strain ATCC BAA-471 / A3(2) / M145).